Here is a 559-residue protein sequence, read N- to C-terminus: Prolyl 4-hydroxylase subunit alpha-1 (559 aa).

Positions 1–16 (MRLALLVLATIGYAVA) are cleaved as a signal peptide. The N-linked (GlcNAc...) asparagine glycan is linked to Asn-158. The region spanning 404–512 (TAEELQIANY…KWVSNKWIHE (109 aa)) is the Fe2OG dioxygenase domain. Fe cation-binding residues include His-422, Asp-424, and His-493. Lys-503 is a 2-oxoglutarate binding site.

This sequence belongs to the P4HA family. In terms of assembly, heterotetramer of two alpha chains and two beta chains. Exists either as a phy-1(2)/pdi-2(2) tetramer or as a phy-1/phy-2/pdi-2(2) tetramer. Fe(2+) is required as a cofactor. Requires L-ascorbate as cofactor.

The protein localises to the endoplasmic reticulum lumen. It carries out the reaction L-prolyl-[collagen] + 2-oxoglutarate + O2 = trans-4-hydroxy-L-prolyl-[collagen] + succinate + CO2. In terms of biological role, catalyzes the post-translational formation of 4-hydroxyproline in -Xaa-Pro-Gly- sequences in collagens and other proteins. This is Prolyl 4-hydroxylase subunit alpha-1 (dpy-18) from Caenorhabditis elegans.